We begin with the raw amino-acid sequence, 92 residues long: Integration host factor subunit beta (92 aa).

Belongs to the bacterial histone-like protein family. As to quaternary structure, heterodimer of an alpha and a beta chain.

Its function is as follows. This protein is one of the two subunits of integration host factor, a specific DNA-binding protein that functions in genetic recombination as well as in transcriptional and translational control. In Azotobacter vinelandii (strain DJ / ATCC BAA-1303), this protein is Integration host factor subunit beta.